Consider the following 297-residue polypeptide: Indole-3-glycerol phosphate synthase (297 aa).

The protein belongs to the TrpC family.

The catalysed reaction is 1-(2-carboxyphenylamino)-1-deoxy-D-ribulose 5-phosphate + H(+) = (1S,2R)-1-C-(indol-3-yl)glycerol 3-phosphate + CO2 + H2O. It participates in amino-acid biosynthesis; L-tryptophan biosynthesis; L-tryptophan from chorismate: step 4/5. This is Indole-3-glycerol phosphate synthase from Trichodesmium erythraeum (strain IMS101).